The sequence spans 391 residues: Elongation factor Tu (391 aa).

A tr-type G domain is found at 10 to 201; sequence KPHVNIGTIG…QVDAYIPTPV (192 aa). A G1 region spans residues 19-26; that stretch reads GHVDHGKT. Position 19 to 26 (19 to 26) interacts with GTP; that stretch reads GHVDHGKT. Thr26 provides a ligand contact to Mg(2+). A G2 region spans residues 55 to 59; sequence GITIS. Residues 76–79 form a G3 region; it reads DCPG. Residues 76–80 and 131–134 each bind GTP; these read DCPGH and NKVD. Positions 131 to 134 are G4; it reads NKVD. Positions 169-171 are G5; the sequence is SAL.

This sequence belongs to the TRAFAC class translation factor GTPase superfamily. Classic translation factor GTPase family. EF-Tu/EF-1A subfamily. Monomer.

The protein localises to the cytoplasm. It catalyses the reaction GTP + H2O = GDP + phosphate + H(+). GTP hydrolase that promotes the GTP-dependent binding of aminoacyl-tRNA to the A-site of ribosomes during protein biosynthesis. This chain is Elongation factor Tu, found in Mesorhizobium japonicum (strain LMG 29417 / CECT 9101 / MAFF 303099) (Mesorhizobium loti (strain MAFF 303099)).